The following is a 354-amino-acid chain: Polyribonucleotide 5'-hydroxyl-kinase PF0112 (354 aa).

Residue 36–43 (GDVDTGKT) coordinates ATP.

A divalent metal cation is required as a cofactor.

The enzyme catalyses a 5'-end dephospho-2'-deoxyribonucleoside-DNA + ATP = a 5'-end 5'-phospho-2'-deoxyribonucleoside-DNA + ADP + H(+). The catalysed reaction is a 5'-end dephospho-ribonucleoside-RNA + ATP = a 5'-end 5'-phospho-ribonucleoside-RNA + ADP + H(+). In terms of biological role, polynucleotide kinase that can phosphorylate the 5'-hydroxyl groups of both single-stranded RNA (ssRNA) and single-stranded DNA (ssDNA). Exhibits a strong preference for ssRNA. The sequence is that of Polyribonucleotide 5'-hydroxyl-kinase PF0112 from Pyrococcus furiosus (strain ATCC 43587 / DSM 3638 / JCM 8422 / Vc1).